The primary structure comprises 290 residues: Bifunctional protein FolD (290 aa).

NADP(+) is bound by residues 174-176 (GHS), isoleucine 199, and isoleucine 240.

Belongs to the tetrahydrofolate dehydrogenase/cyclohydrolase family. Homodimer.

The enzyme catalyses (6R)-5,10-methylene-5,6,7,8-tetrahydrofolate + NADP(+) = (6R)-5,10-methenyltetrahydrofolate + NADPH. It catalyses the reaction (6R)-5,10-methenyltetrahydrofolate + H2O = (6R)-10-formyltetrahydrofolate + H(+). It participates in one-carbon metabolism; tetrahydrofolate interconversion. Catalyzes the oxidation of 5,10-methylenetetrahydrofolate to 5,10-methenyltetrahydrofolate and then the hydrolysis of 5,10-methenyltetrahydrofolate to 10-formyltetrahydrofolate. This chain is Bifunctional protein FolD, found in Methanosarcina acetivorans (strain ATCC 35395 / DSM 2834 / JCM 12185 / C2A).